Reading from the N-terminus, the 478-residue chain is Glutamate-1-semialdehyde 2,1-aminomutase, chloroplastic (478 aa).

The N-terminal 40 residues, 1-40 (MAGAAAASAAAAAVASGISARPVAPRPSPSRARAPRSVVR), are a transit peptide targeting the chloroplast. Residues 15–36 (ASGISARPVAPRPSPSRARAPR) form a disordered region. K318 carries the N6-(pyridoxal phosphate)lysine modification.

The protein belongs to the class-III pyridoxal-phosphate-dependent aminotransferase family. HemL subfamily. In terms of assembly, homodimer. Requires pyridoxal 5'-phosphate as cofactor.

The protein localises to the plastid. The protein resides in the chloroplast. It catalyses the reaction (S)-4-amino-5-oxopentanoate = 5-aminolevulinate. Its pathway is porphyrin-containing compound metabolism; protoporphyrin-IX biosynthesis; 5-aminolevulinate from L-glutamyl-tRNA(Glu): step 2/2. It functions in the pathway porphyrin-containing compound metabolism; chlorophyll biosynthesis. The polypeptide is Glutamate-1-semialdehyde 2,1-aminomutase, chloroplastic (GSA) (Oryza sativa subsp. japonica (Rice)).